The sequence spans 160 residues: 6,7-dimethyl-8-ribityllumazine synthase (160 aa).

5-amino-6-(D-ribitylamino)uracil contacts are provided by residues tryptophan 27, 59-61 (AIE), and 81-83 (VVI). 86–87 (QT) serves as a coordination point for (2S)-2-hydroxy-3-oxobutyl phosphate. Residue histidine 89 is the Proton donor of the active site. Asparagine 114 serves as a coordination point for 5-amino-6-(D-ribitylamino)uracil. Residue arginine 128 coordinates (2S)-2-hydroxy-3-oxobutyl phosphate.

The protein belongs to the DMRL synthase family. In terms of assembly, homopentamer.

The enzyme catalyses (2S)-2-hydroxy-3-oxobutyl phosphate + 5-amino-6-(D-ribitylamino)uracil = 6,7-dimethyl-8-(1-D-ribityl)lumazine + phosphate + 2 H2O + H(+). Its pathway is cofactor biosynthesis; riboflavin biosynthesis; riboflavin from 2-hydroxy-3-oxobutyl phosphate and 5-amino-6-(D-ribitylamino)uracil: step 1/2. In terms of biological role, catalyzes the formation of 6,7-dimethyl-8-ribityllumazine by condensation of 5-amino-6-(D-ribitylamino)uracil with 3,4-dihydroxy-2-butanone 4-phosphate. This is the penultimate step in the biosynthesis of riboflavin. In Mycobacterium avium (strain 104), this protein is 6,7-dimethyl-8-ribityllumazine synthase.